We begin with the raw amino-acid sequence, 363 residues long: Mitogen-activated protein kinase 4 (363 aa).

Positions 30–318 (YDLVKVVGFG…AKQVMEHPYF (289 aa)) constitute a Protein kinase domain. ATP is bound by residues 36-44 (VGFGACGTV) and K59. The active-site Proton acceptor is the D156. Phosphoserine occurs at positions 186 and 187. A Phosphothreonine; by MKK5 modification is found at T190. Positions 190–192 (TQY) match the TQY motif. A Phosphotyrosine; by MKK5 modification is found at Y192.

The protein belongs to the protein kinase superfamily. CMGC Ser/Thr protein kinase family. MAP kinase subfamily. The cofactor is Mg(2+). In terms of processing, dually phosphorylated on Thr-190 and Tyr-192, which activates the enzyme.

The enzyme catalyses L-seryl-[protein] + ATP = O-phospho-L-seryl-[protein] + ADP + H(+). The catalysed reaction is L-threonyl-[protein] + ATP = O-phospho-L-threonyl-[protein] + ADP + H(+). Functionally, essential for the two main proliferating life stages, the promastigotes and amastigotes, of the parasite. This Leishmania mexicana protein is Mitogen-activated protein kinase 4.